The primary structure comprises 497 residues: Cytochrome P450 98A8 (497 aa).

The chain crosses the membrane as a helical span at residues 2–19 (IIYLISLLPIIVATLMLY). Cys-431 contacts heme.

It belongs to the cytochrome P450 family. It depends on heme as a cofactor. In terms of tissue distribution, strongly expressed in inflorescence tips, young flower buds, seeds, stamen, tapetum and pollen.

Its subcellular location is the membrane. In terms of biological role, acts redundantly with CYP98A9 as tricoumaroylspermidine meta-hydroxylase. Also catalyzes the meta-hydroxylation of the three triferuloylspermidine phenolic rings. Unable to use 5-O-(4-coumaroyl) D-quinate or 5-O-(4-coumaroyl) shikimate as substrates. The protein is Cytochrome P450 98A8 (CYP98A8) of Arabidopsis thaliana (Mouse-ear cress).